The following is a 152-amino-acid chain: Transcriptional regulator MraZ (152 aa).

SpoVT-AbrB domains are found at residues 5-52 (ASAI…PFDE) and 81-124 (AHEC…DETA).

The protein belongs to the MraZ family. Forms oligomers.

The protein localises to the cytoplasm. Its subcellular location is the nucleoid. The protein is Transcriptional regulator MraZ of Shewanella sediminis (strain HAW-EB3).